The following is a 928-amino-acid chain: DNA-binding protein RFX6 (928 aa).

Disordered stretches follow at residues 1-22 (MAKV…QVSP) and 53-102 (PGGA…AADL). A compositionally biased stretch (basic and acidic residues) spans 92–101 (SHDSKTKAAD). The segment at residues 124–199 (TLQWLEENYI…YHYYGIGIKE (76 aa)) is a DNA-binding region (RFX-type winged-helix).

The protein belongs to the RFX family. As to quaternary structure, interacts with RFX3.

The protein localises to the nucleus. Transcription factor required to direct islet cell differentiation during endocrine pancreas development. Specifically required for the differentiation of 4 of the 5 islet cell types and for the production of insulin. Not required for pancreatic PP (polypeptide-producing) cells differentiation. Acts downstream of NEUROG3 and regulates the transcription factors involved in beta-cell maturation and function, thereby restricting the expression of the beta-cell differentiation and specification genes, and thus the beta-cell fate choice. Activates transcription by forming a heterodimer with RFX3 and binding to the X-box in the promoter of target genes. Involved in glucose-stimulated insulin secretion by promoting insulin and L-type calcium channel gene transcription. The chain is DNA-binding protein RFX6 (RFX6) from Ailuropoda melanoleuca (Giant panda).